We begin with the raw amino-acid sequence, 291 residues long: Pantothenate synthetase (291 aa).

Met30 to His37 is a binding site for ATP. Catalysis depends on His37, which acts as the Proton donor. Gln61 contributes to the (R)-pantoate binding site. Gln61 is a binding site for beta-alanine. ATP is bound at residue Gly147–Asp150. Residue Gln153 participates in (R)-pantoate binding. ATP is bound by residues Val176 and Leu184–Arg187.

This sequence belongs to the pantothenate synthetase family. Homodimer.

Its subcellular location is the cytoplasm. The enzyme catalyses (R)-pantoate + beta-alanine + ATP = (R)-pantothenate + AMP + diphosphate + H(+). Its pathway is cofactor biosynthesis; (R)-pantothenate biosynthesis; (R)-pantothenate from (R)-pantoate and beta-alanine: step 1/1. Functionally, catalyzes the condensation of pantoate with beta-alanine in an ATP-dependent reaction via a pantoyl-adenylate intermediate. This is Pantothenate synthetase from Rhizobium rhizogenes (strain K84 / ATCC BAA-868) (Agrobacterium radiobacter).